The following is a 447-amino-acid chain: Dihydroorotase (447 aa).

H81 and H83 together coordinate Zn(2+). Substrate is bound by residues 83 to 85 (HFR) and N115. Residues D171, H198, and H252 each coordinate Zn(2+). A substrate-binding site is contributed by N298. A Zn(2+)-binding site is contributed by D325. D325 is a catalytic residue. Substrate-binding positions include H329 and 343–344 (FG).

Belongs to the metallo-dependent hydrolases superfamily. DHOase family. Class I DHOase subfamily. Requires Zn(2+) as cofactor.

The enzyme catalyses (S)-dihydroorotate + H2O = N-carbamoyl-L-aspartate + H(+). The protein operates within pyrimidine metabolism; UMP biosynthesis via de novo pathway; (S)-dihydroorotate from bicarbonate: step 3/3. In terms of biological role, catalyzes the reversible cyclization of carbamoyl aspartate to dihydroorotate. The protein is Dihydroorotase of Ehrlichia canis (strain Jake).